The chain runs to 258 residues: Small ribosomal subunit protein uS2 (258 aa).

Residues 227-258 form a disordered region; the sequence is GEQFAPASEQKEEVKTQEVQEVEDSNDDVIDD. Over residues 235-244 the composition is skewed to basic and acidic residues; it reads EQKEEVKTQE. Acidic residues predominate over residues 246-258; the sequence is QEVEDSNDDVIDD.

This sequence belongs to the universal ribosomal protein uS2 family.

The chain is Small ribosomal subunit protein uS2 from Caldicellulosiruptor saccharolyticus (strain ATCC 43494 / DSM 8903 / Tp8T 6331).